A 398-amino-acid polypeptide reads, in one-letter code: Acetyl-CoA acetyltransferase (398 aa).

Position 2 is an N-acetylserine (S2). C91 (acyl-thioester intermediate) is an active-site residue. 2 residues coordinate CoA: Y186 and K231. Position 186 (Y186) interacts with K(+). 3 residues coordinate K(+): A248, A249, and A251. S252 contributes to the CoA binding site. V350 lines the K(+) pocket. Residues H354 and C384 each act as proton acceptor in the active site.

The protein belongs to the thiolase-like superfamily. Thiolase family. Homotetramer.

The protein resides in the cytoplasm. The enzyme catalyses 2 acetyl-CoA = acetoacetyl-CoA + CoA. The protein operates within metabolic intermediate biosynthesis; (R)-mevalonate biosynthesis; (R)-mevalonate from acetyl-CoA: step 1/3. Functionally, acetyl-CoA acetyltransferase; part of the first module of ergosterol biosynthesis pathway that includes the early steps of the pathway, conserved across all eukaryotes, and which results in the formation of mevalonate from acetyl-coenzyme A (acetyl-CoA). In this module, the acetyl-CoA acetyltransferase ERG10 catalyzes the formation of acetoacetyl-CoA. The hydroxymethylglutaryl-CoA synthase ERG13 then condenses acetyl-CoA with acetoacetyl-CoA to form HMG-CoA. The rate-limiting step of the early module is the reduction to mevalonate by the 3-hydroxy-3-methylglutaryl-coenzyme A (HMG-CoA) reductases HMG1 and HMG2 which are derived from a single ancestral HMGR gene by gene duplication. This Saccharomyces pastorianus (strain ATCC 76670 / Carlsberg bottom yeast no.2 / CBS 1503 / CLIB 180 / NBRC 10610 / NRRL Y-1525) (Saaz-type lager yeast) protein is Acetyl-CoA acetyltransferase.